The sequence spans 298 residues: Probable endonuclease 4 (298 aa).

Zn(2+)-binding residues include H69, H111, E146, D180, H183, H215, D228, H230, and E260.

The protein belongs to the AP endonuclease 2 family. It depends on Zn(2+) as a cofactor.

It carries out the reaction Endonucleolytic cleavage to 5'-phosphooligonucleotide end-products.. Endonuclease IV plays a role in DNA repair. It cleaves phosphodiester bonds at apurinic or apyrimidinic (AP) sites, generating a 3'-hydroxyl group and a 5'-terminal sugar phosphate. The protein is Probable endonuclease 4 of Bacillus cereus (strain 03BB102).